A 187-amino-acid polypeptide reads, in one-letter code: Adenine phosphoribosyltransferase (187 aa).

Belongs to the purine/pyrimidine phosphoribosyltransferase family. As to quaternary structure, homodimer.

The protein resides in the cytoplasm. It catalyses the reaction AMP + diphosphate = 5-phospho-alpha-D-ribose 1-diphosphate + adenine. Its pathway is purine metabolism; AMP biosynthesis via salvage pathway; AMP from adenine: step 1/1. In terms of biological role, catalyzes a salvage reaction resulting in the formation of AMP, that is energically less costly than de novo synthesis. The chain is Adenine phosphoribosyltransferase from Burkholderia pseudomallei (strain 1106a).